A 65-amino-acid polypeptide reads, in one-letter code: MDPEACPCPTGGSCTCSDSCKCEGCTCASSKKSCCPAECEKCAKDCVCKGGEGAEAEEKKCGCCQ.

At Met1 the chain carries N-acetylmethionine. Residues 1–30 (MDPEACPCPTGGSCTCSDSCKCEGCTCASS) are beta. A divalent metal cation is bound by residues Cys6, Cys8, Cys14, Cys16, Cys20, Cys22, Cys25, and Cys27. An alpha region spans residues 31–65 (KKSCCPAECEKCAKDCVCKGGEGAEAEEKKCGCCQ). Ser33 carries the post-translational modification Phosphoserine. A divalent metal cation contacts are provided by Cys34, Cys35, Cys39, Cys42, Cys46, Cys48, Cys61, Cys63, and Cys64.

It belongs to the metallothionein superfamily. Type 1 family.

Binds heavy metals. Contains five zinc and one copper atoms per polypeptide chain and only a negligible amount of cadmium. The chain is Metallothionein-3 (MT3) from Ovis aries (Sheep).